The primary structure comprises 979 residues: Pheromone-regulated membrane protein 10 (979 aa).

Disordered stretches follow at residues M1 to K279, L295 to G318, Y337 to V411, F432 to D451, and A491 to F528. Residues G15–S26 are compositionally biased toward basic and acidic residues. Positions S29–S38 are enriched in low complexity. Acidic residues predominate over residues L54–W68. Polar residues predominate over residues D77–N86. Residues A105–R115 are compositionally biased toward basic and acidic residues. Residues E122–M135 show a composition bias toward acidic residues. 2 stretches are compositionally biased toward basic and acidic residues: residues E138 to D148 and S158 to T175. Polar residues predominate over residues E192 to N213. Residues G253–D263 show a composition bias toward basic and acidic residues. Over residues S360–S372 the composition is skewed to low complexity. Acidic residues predominate over residues D379 to L395. Residues A503–N515 show a composition bias toward polar residues. Residues T516–F528 show a composition bias toward basic residues. The next 10 membrane-spanning stretches (helical) occupy residues W658–G678, W680–V700, V710–G730, I734–L754, F773–F793, P809–I829, A832–Y852, F864–W884, G886–S906, and I946–V966.

This sequence belongs to the ThrE exporter (TC 2.A.79) family.

The protein resides in the membrane. The polypeptide is Pheromone-regulated membrane protein 10 (Zygosaccharomyces rouxii (strain ATCC 2623 / CBS 732 / NBRC 1130 / NCYC 568 / NRRL Y-229)).